The sequence spans 1334 residues: Rho1 guanine nucleotide exchange factor 1 (1334 aa).

4 disordered regions span residues 1–89, 135–182, 203–245, and 381–402; these read MDYR…ASPV, PQVS…SDSV, LDQN…TSGT, and SLIN…ASSP. Positions 138–149 are enriched in low complexity; sequence SNHAPNNSNSPS. The span at 150-164 shows a compositional bias: polar residues; that stretch reads LTWHTSSGDDSNQNP. Over residues 170–180 the composition is skewed to low complexity; the sequence is QSQSSTSPVSD. 3 stretches are compositionally biased toward polar residues: residues 213-227, 234-245, and 381-400; these read VRSS…NSRL, HTVGSHSFTSGT, and SLIN…SEAS. Serine 381 is subject to Phosphoserine. A DH domain is found at 621-808; it reads KRQEVICEVI…RGFLSRLNVE (188 aa). Residues 843–973 enclose the PH domain; the sequence is QLIFKGPLKK…WLEHIDNQQT (131 aa). Positions 995-1293 constitute a CNH domain; that stretch reads DNKVNAIGVY…RLLADGRGKL (299 aa).

Its subcellular location is the cytoplasm. Stimulates the exchange of Rho1 and Rho5 GDP-bound form into GTP-bound form. Controls septum formation, cell wall synthesis and localization of F-actin patches. Coordinates actin deposition with cell wall biosynthesis during bipolar growth. The protein is Rho1 guanine nucleotide exchange factor 1 (rgf1) of Schizosaccharomyces pombe (strain 972 / ATCC 24843) (Fission yeast).